The following is a 183-amino-acid chain: Large ribosomal subunit protein eL18 (183 aa).

Positions 150–183 (RHFGPAPGAPRSHTKPYVRTKGHEKARPSRRANV) are disordered.

This sequence belongs to the eukaryotic ribosomal protein eL18 family.

The protein localises to the cytoplasm. The sequence is that of Large ribosomal subunit protein eL18 (RpL18) from Bombyx mori (Silk moth).